The following is a 127-amino-acid chain: Mu-like prophage FluMu protein gp41 (127 aa).

The interval 107–127 is disordered; that stretch reads VSRGRLDTADQETGKDLSAVS. A compositionally biased stretch (basic and acidic residues) spans 110-121; sequence GRLDTADQETGK.

To phage Mu protein gp41.

In Haemophilus influenzae (strain ATCC 51907 / DSM 11121 / KW20 / Rd), this protein is Mu-like prophage FluMu protein gp41.